The primary structure comprises 252 residues: GTP cyclohydrolase 1 type 2 homolog (252 aa).

A divalent metal cation contacts are provided by His-65, His-66, Asp-103, His-220, and Glu-224.

It belongs to the GTP cyclohydrolase I type 2/NIF3 family. As to quaternary structure, homohexamer.

The protein is GTP cyclohydrolase 1 type 2 homolog of Pseudomonas aeruginosa (strain ATCC 15692 / DSM 22644 / CIP 104116 / JCM 14847 / LMG 12228 / 1C / PRS 101 / PAO1).